A 757-amino-acid polypeptide reads, in one-letter code: Chloride anion exchanger (757 aa).

Residues 1 to 71 are Cytoplasmic-facing; it reads MIEAIGNQYV…SWLPAYKIKE (71 aa). A helical membrane pass occupies residues 72-92; the sequence is WLLSDIVSGISTGLVAVLQGL. Ala-93 is a topological domain (extracellular). Residues 94–114 traverse the membrane as a helical segment; it reads FALLVNIPPAYGLYAAFFPVI. Topologically, residues 115–124 are cytoplasmic; that stretch reads TYFFLGTSRH. A helical transmembrane segment spans residues 125–145; that stretch reads ISVGPFPVLSMMVGVVVTRVA. Residues 146-176 lie on the Extracellular side of the membrane; the sequence is SGSDTSPALSSSSAENDSMIEEKVMVAASVT. An N-linked (GlcNAc...) asparagine glycan is attached at Asn-161. A helical membrane pass occupies residues 177-197; that stretch reads VLSGIIQLLLGVLQIGFVVIY. At 198–201 the chain is on the cytoplasmic side; that stretch reads LSES. Residues 202–222 form a helical membrane-spanning segment; the sequence is LISGFTTAAAIHVLVSQLKFM. Over 223-250 the chain is Extracellular; it reads LQLTVPAHSDPFSIFKVLESVFSQIQKT. A helical membrane pass occupies residues 251-271; sequence NIADLVTSVIILVVVFVVKEI. Over 272–278 the chain is Cytoplasmic; it reads NQRYRSK. The helical transmembrane segment at 279 to 299 threads the bilayer; sequence LPVPIPIELIMTVIATGISYG. The Extracellular portion of the chain corresponds to 300–335; sequence CNFEQRFGVAVVGNMSLGFQPPITPSVEVFQDTIGD. The chain crosses the membrane as a helical span at residues 336–356; that stretch reads CFGIAIVGFAVAFSVASVYSL. Residues 357–367 lie on the Cytoplasmic side of the membrane; it reads KYDYPIDGNQE. The chain crosses the membrane as a helical span at residues 368-388; that stretch reads LIALGVSNIFTGAFKGFAGST. Residues 389-404 lie on the Extracellular side of the membrane; the sequence is ALSRSGVQESTGGKTQ. Residues 405–425 traverse the membrane as a helical segment; it reads VAGLLSAVIVLIVIVAIGFLL. Topologically, residues 426 to 462 are cytoplasmic; it reads QPLQKSVLAALALGNLKGMLMQFAEIGRLWKKDKYDC. Residues 463–483 form a helical membrane-spanning segment; the sequence is LIWIMTFIFAIVLGLGLGLAA. Residues 484 to 757 lie on the Extracellular side of the membrane; that stretch reads SVAFQLLTIV…ECQVPVETKF (274 aa). Residues 518-713 form the STAS domain; that stretch reads NYADVYEPEG…LTIHDAILHI (196 aa). The PDZ-binding signature appears at 754 to 757; it reads ETKF.

The protein belongs to the SLC26A/SulP transporter (TC 2.A.53) family. Interacts with PDZK1, CFTR, SLC26A6 and NHERF1. Interacts (via PDZ-binding motif) with NHERF4 (via the third PDZ domain); interaction leads to decreased expression of SLC26A3 on the cell membrane resulting in its reduced exchanger activity. In terms of processing, N-glycosylation is required for efficient cell surface expression, and protection from proteolytic degradation.

It localises to the apical cell membrane. Its subcellular location is the membrane. It is found in the cell membrane. The enzyme catalyses hydrogencarbonate(in) + 2 chloride(out) = hydrogencarbonate(out) + 2 chloride(in). Functionally, mediates chloride-bicarbonate exchange with a chloride bicarbonate stoichiometry of 2:1 in the intestinal epithelia. Plays a role in the chloride and bicarbonate homeostasis during sperm epididymal maturation and capacitation. The sequence is that of Chloride anion exchanger (Slc26a3) from Rattus norvegicus (Rat).